Consider the following 455-residue polypeptide: Ribulose bisphosphate carboxylase large chain (455 aa).

Residue Lys-5 is modified to N6,N6,N6-trimethyllysine. The substrate site is built by Asn-114 and Thr-164. Lys-166 (proton acceptor) is an active-site residue. Lys-168 contacts substrate. Positions 192, 194, and 195 each coordinate Mg(2+). Lys-192 bears the N6-carboxylysine mark. His-285 (proton acceptor) is an active-site residue. Residues Arg-286, His-318, and Ser-370 each contribute to the substrate site.

The protein belongs to the RuBisCO large chain family. Type I subfamily. Heterohexadecamer of 8 large chains and 8 small chains; disulfide-linked. The disulfide link is formed within the large subunit homodimers. It depends on Mg(2+) as a cofactor. Post-translationally, the disulfide bond which can form in the large chain dimeric partners within the hexadecamer appears to be associated with oxidative stress and protein turnover.

The protein resides in the plastid. It localises to the chloroplast. The catalysed reaction is 2 (2R)-3-phosphoglycerate + 2 H(+) = D-ribulose 1,5-bisphosphate + CO2 + H2O. The enzyme catalyses D-ribulose 1,5-bisphosphate + O2 = 2-phosphoglycolate + (2R)-3-phosphoglycerate + 2 H(+). Functionally, ruBisCO catalyzes two reactions: the carboxylation of D-ribulose 1,5-bisphosphate, the primary event in carbon dioxide fixation, as well as the oxidative fragmentation of the pentose substrate in the photorespiration process. Both reactions occur simultaneously and in competition at the same active site. This Lupinus cosentinii (West Australian blue lupine) protein is Ribulose bisphosphate carboxylase large chain.